We begin with the raw amino-acid sequence, 622 residues long: C6 finger transcription factor fumR (622 aa).

The zn(2)-C6 fungal-type DNA-binding region spans 94–123 (CDRCHGQKLRCRRENNSDTCVRCARAGVRC). Disordered regions lie at residues 127–175 (PMRL…HSDH), 206–248 (ALTA…APNL), 299–360 (FDQA…SNSI), and 556–585 (PATG…DAGD). Composition is skewed to polar residues over residues 148–167 (PANG…GPND), 217–226 (VHTSQPSGPQ), and 347–360 (RGNS…SNSI). A compositionally biased stretch (low complexity) spans 556-571 (PATGSASKTAASGPPA).

The protein localises to the nucleus. Functionally, transcription factor that regulates the expression of the gene clusters that mediate the biosynthesis of pseurotin and fumagillin. This Aspergillus fumigatus (strain ATCC MYA-4609 / CBS 101355 / FGSC A1100 / Af293) (Neosartorya fumigata) protein is C6 finger transcription factor fumR.